A 366-amino-acid polypeptide reads, in one-letter code: MGAETVTAILDTTLGVVFTWLGWKTAKIIRKYTPYSYPNARINAMEAKLLTGQRFNELAESRTLQNFIVNLEDTDYKVHLSGVTEDPLEIERAFERALASTYLLMEEILPKRVSGFFRLLLEEWDVRNIASVVKAKVRGEPAIDYVVEIGTMVPKVKAIAEAKTMEEILVILEGTPYEEHYQRLLLGEIDVDQFETELYKVYYSRLLEYATSRKEEERLILEEFVRTKIDIRNIVTLLRAKRAGLPGEVIKRHLIPGGSVKLDTALNVDDLGMALAELDSTKYGKVLRDEREKIEKDLTLVEPVLQNHLLRRMEELTRFYPLSVATPLSYILKKEREIKKLRAMAKLIADGFEPEKIKEIIGEELA.

The protein belongs to the V-ATPase V0D/AC39 subunit family. In terms of assembly, has multiple subunits with at least A(3), B(3), C, D, E, F, H, I and proteolipid K(x).

The protein resides in the cell membrane. Functionally, component of the A-type ATP synthase that produces ATP from ADP in the presence of a proton gradient across the membrane. This is A-type ATP synthase subunit C from Thermococcus gammatolerans (strain DSM 15229 / JCM 11827 / EJ3).